Consider the following 388-residue polypeptide: Succinate--CoA ligase [ADP-forming] subunit beta (388 aa).

The ATP-grasp domain occupies 9–244 (KQLFAEYGLP…PSQDDPREAH (236 aa)). Residues lysine 46, 53–55 (GRG), glutamate 99, threonine 102, and glutamate 107 each bind ATP. The Mg(2+) site is built by asparagine 199 and aspartate 213. Residues asparagine 264 and 321–323 (GIV) each bind substrate.

Belongs to the succinate/malate CoA ligase beta subunit family. Heterotetramer of two alpha and two beta subunits. It depends on Mg(2+) as a cofactor.

The enzyme catalyses succinate + ATP + CoA = succinyl-CoA + ADP + phosphate. It catalyses the reaction GTP + succinate + CoA = succinyl-CoA + GDP + phosphate. It participates in carbohydrate metabolism; tricarboxylic acid cycle; succinate from succinyl-CoA (ligase route): step 1/1. Succinyl-CoA synthetase functions in the citric acid cycle (TCA), coupling the hydrolysis of succinyl-CoA to the synthesis of either ATP or GTP and thus represents the only step of substrate-level phosphorylation in the TCA. The beta subunit provides nucleotide specificity of the enzyme and binds the substrate succinate, while the binding sites for coenzyme A and phosphate are found in the alpha subunit. This Aeromonas hydrophila subsp. hydrophila (strain ATCC 7966 / DSM 30187 / BCRC 13018 / CCUG 14551 / JCM 1027 / KCTC 2358 / NCIMB 9240 / NCTC 8049) protein is Succinate--CoA ligase [ADP-forming] subunit beta.